Reading from the N-terminus, the 307-residue chain is Protoheme IX farnesyltransferase (307 aa).

9 helical membrane-spanning segments follow: residues 28 to 48 (VTQL…PGMV), 50 to 70 (WPVL…AFAI), 100 to 120 (ILLF…VFAN), 122 to 142 (LTMW…TLLL), 149 to 169 (NIVI…AAVA), 176 to 196 (AWIL…ALAL), 218 to 238 (FTLL…ILPF), 243 to 263 (SGYL…VHAW), and 282 to 302 (IVYL…KFGP).

This sequence belongs to the UbiA prenyltransferase family. Protoheme IX farnesyltransferase subfamily.

It is found in the cell inner membrane. It carries out the reaction heme b + (2E,6E)-farnesyl diphosphate + H2O = Fe(II)-heme o + diphosphate. It participates in porphyrin-containing compound metabolism; heme O biosynthesis; heme O from protoheme: step 1/1. Functionally, converts heme B (protoheme IX) to heme O by substitution of the vinyl group on carbon 2 of heme B porphyrin ring with a hydroxyethyl farnesyl side group. In Ralstonia nicotianae (strain ATCC BAA-1114 / GMI1000) (Ralstonia solanacearum), this protein is Protoheme IX farnesyltransferase.